Consider the following 330-residue polypeptide: Ketol-acid reductoisomerase (NADP(+)) (330 aa).

One can recognise a KARI N-terminal Rossmann domain in the interval 1–182; it reads MKKVYYDQDA…GCTRAGVFET (182 aa). NADP(+)-binding positions include 25 to 28, Ser-51, Ser-53, and 83 to 86; these read YGSQ and DQIQ. The active site involves His-108. An NADP(+)-binding site is contributed by Gly-134. In terms of domain architecture, KARI C-terminal knotted spans 183-328; the sequence is TFKEETETDL…AELRQMMPWL (146 aa). Residues Asp-191, Glu-195, Glu-227, and Glu-231 each coordinate Mg(2+). Ser-252 serves as a coordination point for substrate.

This sequence belongs to the ketol-acid reductoisomerase family. Mg(2+) serves as cofactor.

It catalyses the reaction (2R)-2,3-dihydroxy-3-methylbutanoate + NADP(+) = (2S)-2-acetolactate + NADPH + H(+). The enzyme catalyses (2R,3R)-2,3-dihydroxy-3-methylpentanoate + NADP(+) = (S)-2-ethyl-2-hydroxy-3-oxobutanoate + NADPH + H(+). It participates in amino-acid biosynthesis; L-isoleucine biosynthesis; L-isoleucine from 2-oxobutanoate: step 2/4. It functions in the pathway amino-acid biosynthesis; L-valine biosynthesis; L-valine from pyruvate: step 2/4. Involved in the biosynthesis of branched-chain amino acids (BCAA). Catalyzes an alkyl-migration followed by a ketol-acid reduction of (S)-2-acetolactate (S2AL) to yield (R)-2,3-dihydroxy-isovalerate. In the isomerase reaction, S2AL is rearranged via a Mg-dependent methyl migration to produce 3-hydroxy-3-methyl-2-ketobutyrate (HMKB). In the reductase reaction, this 2-ketoacid undergoes a metal-dependent reduction by NADPH to yield (R)-2,3-dihydroxy-isovalerate. The chain is Ketol-acid reductoisomerase (NADP(+)) from Carboxydothermus hydrogenoformans (strain ATCC BAA-161 / DSM 6008 / Z-2901).